We begin with the raw amino-acid sequence, 507 residues long: ATP synthase subunit alpha, chloroplastic (507 aa).

Residue 170 to 177 (GDRQTGKT) participates in ATP binding.

This sequence belongs to the ATPase alpha/beta chains family. F-type ATPases have 2 components, CF(1) - the catalytic core - and CF(0) - the membrane proton channel. CF(1) has five subunits: alpha(3), beta(3), gamma(1), delta(1), epsilon(1). CF(0) has four main subunits: a, b, b' and c.

The protein resides in the plastid. It localises to the chloroplast thylakoid membrane. The enzyme catalyses ATP + H2O + 4 H(+)(in) = ADP + phosphate + 5 H(+)(out). Produces ATP from ADP in the presence of a proton gradient across the membrane. The alpha chain is a regulatory subunit. The chain is ATP synthase subunit alpha, chloroplastic from Lemna minor (Common duckweed).